Here is a 298-residue protein sequence, read N- to C-terminus: ATP synthase gamma chain (298 aa).

It belongs to the ATPase gamma chain family. As to quaternary structure, F-type ATPases have 2 components, CF(1) - the catalytic core - and CF(0) - the membrane proton channel. CF(1) has five subunits: alpha(3), beta(3), gamma(1), delta(1), epsilon(1). CF(0) has three main subunits: a, b and c.

It is found in the cell inner membrane. Its function is as follows. Produces ATP from ADP in the presence of a proton gradient across the membrane. The gamma chain is believed to be important in regulating ATPase activity and the flow of protons through the CF(0) complex. The chain is ATP synthase gamma chain from Francisella tularensis subsp. tularensis (strain FSC 198).